A 138-amino-acid chain; its full sequence is Putative pre-16S rRNA nuclease (138 aa).

The protein belongs to the YqgF nuclease family.

It is found in the cytoplasm. Functionally, could be a nuclease involved in processing of the 5'-end of pre-16S rRNA. This chain is Putative pre-16S rRNA nuclease, found in Karelsulcia muelleri (strain GWSS) (Sulcia muelleri).